We begin with the raw amino-acid sequence, 353 residues long: Tetraacyldisaccharide 4'-kinase (353 aa).

An ATP-binding site is contributed by 49–56 (TAGGTGKT).

It belongs to the LpxK family.

The catalysed reaction is a lipid A disaccharide + ATP = a lipid IVA + ADP + H(+). It participates in glycolipid biosynthesis; lipid IV(A) biosynthesis; lipid IV(A) from (3R)-3-hydroxytetradecanoyl-[acyl-carrier-protein] and UDP-N-acetyl-alpha-D-glucosamine: step 6/6. Transfers the gamma-phosphate of ATP to the 4'-position of a tetraacyldisaccharide 1-phosphate intermediate (termed DS-1-P) to form tetraacyldisaccharide 1,4'-bis-phosphate (lipid IVA). The chain is Tetraacyldisaccharide 4'-kinase from Chlorobium phaeovibrioides (strain DSM 265 / 1930) (Prosthecochloris vibrioformis (strain DSM 265)).